The chain runs to 242 residues: DNA repair protein RecO (242 aa).

Belongs to the RecO family. In terms of assembly, monomer.

In terms of biological role, involved in DNA repair and RecF pathway recombination. The polypeptide is DNA repair protein RecO (Salmonella dublin (strain CT_02021853)).